A 109-amino-acid chain; its full sequence is Large ribosomal subunit protein uL24 (109 aa).

Belongs to the universal ribosomal protein uL24 family. As to quaternary structure, part of the 50S ribosomal subunit.

Functionally, one of two assembly initiator proteins, it binds directly to the 5'-end of the 23S rRNA, where it nucleates assembly of the 50S subunit. One of the proteins that surrounds the polypeptide exit tunnel on the outside of the subunit. The protein is Large ribosomal subunit protein uL24 of Ehrlichia ruminantium (strain Gardel).